A 428-amino-acid chain; its full sequence is Keratin, type I cytoskeletal 18-A (428 aa).

Residues 2-78 are head; it reads SSSRSVYSSS…NVNLFGGVQN (77 aa). Residues 24–45 are disordered; sequence SAPRFTPGSSAASVHAGAGGSG. Residues 79–114 form a coil 1A region; that stretch reads EKETMQDLNDRLASYLERVRSLESANKKLEVQIRQH. In terms of domain architecture, IF rod spans 79–389; it reads EKETMQDLND…RLLEGDSFDL (311 aa). Residues 115–130 form a linker 1 region; sequence TEKKGPAKDWSPYYMT. The interval 131–222 is coil 1B; the sequence is IEDLKKQVFN…KNHQDDVNEL (92 aa). Positions 223–246 are linker 12; that stretch reads QAQIASSAVTVEVDAPKSQDLGKI. The tract at residues 247–384 is coil 2; sequence MADLRAQYDE…IQTYRRLLEG (138 aa). The tail stretch occupies residues 385-428; the sequence is DSFDLQDAVPVVTTQTVKKVITTTQRLVDGKVVAESNNTEVIKS.

Belongs to the intermediate filament family. Heterotetramer of two type I and two type II keratins. Keratin-18 associates with keratin-8. In terms of processing, proteolytically cleaved by caspases during epithelial cell apoptosis. In terms of tissue distribution, expressed at high levels in notochord and low levels in adult liver.

In terms of biological role, when phosphorylated, plays a role in filament reorganization. The protein is Keratin, type I cytoskeletal 18-A (krt18-a) of Xenopus laevis (African clawed frog).